Consider the following 485-residue polypeptide: Telomeric DNA-binding factor trf1 (485 aa).

A compositionally biased stretch (basic and acidic residues) spans 1-20 (MSKRSLDPSDDFKGQKRLAI). The tract at residues 1 to 23 (MSKRSLDPSDDFKGQKRLAIDPE) is disordered. In terms of domain architecture, HTH myb-type spans 400–457 (RRVANRRSWTKEEEEALLDGLDLVKGPRWSQILELYGPGGKKSEVLKYRNQVQLKDKA). Positions 428–453 (WSQILELYGPGGKKSEVLKYRNQVQL) form a DNA-binding region, H-T-H motif.

In terms of assembly, homodimer.

Its subcellular location is the nucleus. In terms of biological role, binds the telomeric double-stranded TTACAGG repeat and regulates telomere length. The chain is Telomeric DNA-binding factor trf1 (trf1) from Schizosaccharomyces pombe (strain 972 / ATCC 24843) (Fission yeast).